Here is a 607-residue protein sequence, read N- to C-terminus: Elongation factor 4 (607 aa).

The tr-type G domain occupies 11–193 (SKIRNFSIIA…QIVEKVPAPT (183 aa)). Residues 23–28 (DHGKST) and 140–143 (NKID) each bind GTP.

This sequence belongs to the TRAFAC class translation factor GTPase superfamily. Classic translation factor GTPase family. LepA subfamily.

The protein resides in the cell membrane. It catalyses the reaction GTP + H2O = GDP + phosphate + H(+). Functionally, required for accurate and efficient protein synthesis under certain stress conditions. May act as a fidelity factor of the translation reaction, by catalyzing a one-codon backward translocation of tRNAs on improperly translocated ribosomes. Back-translocation proceeds from a post-translocation (POST) complex to a pre-translocation (PRE) complex, thus giving elongation factor G a second chance to translocate the tRNAs correctly. Binds to ribosomes in a GTP-dependent manner. This Bacillus mycoides (strain KBAB4) (Bacillus weihenstephanensis) protein is Elongation factor 4.